The following is a 170-amino-acid chain: NADH-quinone oxidoreductase subunit B (170 aa).

[4Fe-4S] cluster-binding residues include cysteine 42, cysteine 43, cysteine 107, and cysteine 136.

This sequence belongs to the complex I 20 kDa subunit family. In terms of assembly, NDH-1 is composed of 14 different subunits. Subunits NuoB, C, D, E, F, and G constitute the peripheral sector of the complex. [4Fe-4S] cluster serves as cofactor.

Its subcellular location is the cell inner membrane. It carries out the reaction a quinone + NADH + 5 H(+)(in) = a quinol + NAD(+) + 4 H(+)(out). In terms of biological role, NDH-1 shuttles electrons from NADH, via FMN and iron-sulfur (Fe-S) centers, to quinones in the respiratory chain. The immediate electron acceptor for the enzyme in this species is believed to be ubiquinone. Couples the redox reaction to proton translocation (for every two electrons transferred, four hydrogen ions are translocated across the cytoplasmic membrane), and thus conserves the redox energy in a proton gradient. This chain is NADH-quinone oxidoreductase subunit B, found in Campylobacter curvus (strain 525.92).